Consider the following 314-residue polypeptide: Nodulation protein D 2 (314 aa).

The region spanning 6–63 (LDLNLLVVLDALMTERNLTAAARSINLSQPAMSAAVARLRTNFRDDLFAMAGREFIPT) is the HTH lysR-type domain. The segment at residues 23–42 (LTAAARSINLSQPAMSAAVA) is a DNA-binding region (H-T-H motif).

Belongs to the LysR transcriptional regulatory family.

In terms of biological role, nodD regulates the expression of the nodABCFE genes which encode other nodulation proteins. NodD is also a negative regulator of its own expression. Binds flavonoids as inducers. The sequence is that of Nodulation protein D 2 (nodD2) from Rhizobium tropici.